Reading from the N-terminus, the 700-residue chain is MLKMLSFKLLLLAVALGFFEGDAKFGERNEGSGARRRRCLNGNPPKRLKRRDRRVMSQLELLSGGEILCGGFYPRVSCCLQSDSPGLGRLENKIFSATNNSECSRLLEEIQCAPCSPHSQSLFYTPERDVLDGDLALPLLCKDYCKEFFYTCRGHIPGLLQTTADEFCFYYARKDAGLCFPDFPRKQVRGPASNYLGQMEDYEKVGGISRKHKHNCLCVQEVMSGLRQPVSAVHSGDGSHRLFILEKEGYVKILTPEGELFKEPYLDIHKLVQSGIKGGDERGLLSLAFHPNYKKNGKLYVSYTTNQERWAIGPHDHILRVVEYTVSRKNPHQVDVRTARVFLEVAELHRKHLGGQLLFGPDGFLYIILGDGMITLDDMEEMDGLSDFTGSVLRLDVDTDMCNVPYSIPRSNPHFNSTNQPPEVFAHGLHDPGRCAVDRHPTDININLTILCSDSNGKNRSSARILQIIKGRDYESEPSLLEFKPFSNGPLVGGFVYRGCQSERLYGSYVFGDRNGNFLTLQQSPVTKQWQEKPLCLGASSSCRGYFSGHILGFGEDELGEVYILSSSKSMTQTHNGKLYKIVDPKRPLMPEECRVTVQPAQPLTSDCSRLCRNGYYTPTGKCCCSPGWEGDFCRIAKCEPACRHGGVCVRPNKCLCKKGYLGPQCEQVDRNVRRVTRAGILDQIIDMTSYLLDLTSYIV.

An N-terminal signal peptide occupies residues Met-1 to Gly-17. N-linked (GlcNAc...) asparagine glycosylation is present at Asn-99. 10 disulfide bridges follow: Cys-216/Cys-536, Cys-218/Cys-543, Cys-402/Cys-624, Cys-435/Cys-452, Cys-500/Cys-594, Cys-612/Cys-623, Cys-625/Cys-634, Cys-639/Cys-649, Cys-643/Cys-655, and Cys-657/Cys-666. An interaction with SHH zinc binding site region spans residues Leu-376–Phe-388. Position 383 (Asp-383) interacts with Zn(2+). N-linked (GlcNAc...) asparagine glycans are attached at residues Asn-416, Asn-447, and Asn-459. EGF-like domains are found at residues Asp-607–Cys-634 and Arg-635–Glu-667.

Belongs to the HHIP family. As to quaternary structure, interacts with all three hedgehog family members, SHH, IHH and DHH. In terms of tissue distribution, in the adult brain, high expression found in the ventral cochlear nucleus, medial habenula, indusium griseum and tenia tecta. Some expression also in the caudate putamen, the nucleus accumbens, the ventral pallidum and in the superficial layers of the superior colliculus.

It is found in the cell membrane. Its subcellular location is the secreted. Its function is as follows. Modulates hedgehog signaling in several cell types, including brain and lung through direct interaction with members of the hedgehog family. Soluble forms inhibit Shh-induced differentiation in the fibroblast cell line C3H/10T1/2. The chain is Hedgehog-interacting protein (Hhip) from Mus musculus (Mouse).